A 471-amino-acid polypeptide reads, in one-letter code: Microtubule-associated tyrosine carboxypeptidase 1 (471 aa).

Disordered regions lie at residues 1 to 40 (MVLD…PLYP) and 76 to 116 (HMRR…LRPA). His-280 lines the Zn(2+) pocket. Glu-281 (nucleophile) is an active-site residue. His-285 and Glu-316 together coordinate Zn(2+).

Belongs to the peptidase MATCAP family. It depends on Zn(2+) as a cofactor.

It is found in the cytoplasm. Its subcellular location is the cytoskeleton. The catalysed reaction is C-terminal L-alpha-aminoacyl-L-glutamyl-L-glutamyl-L-tyrosyl-[tubulin] + H2O = C-terminal L-alpha-aminoacyl-L-glutamyl-L-glutamyl-[tubulin] + L-tyrosine. It catalyses the reaction C-terminal L-alpha-aminoacyl-L-glutamyl-L-glutamyl-L-phenylalanyl-[tubulin] + H2O = C-terminal L-alpha-aminoacyl-L-glutamyl-L-glutamyl-[tubulin] + L-phenylalanine. In terms of biological role, tyrosine carboxypeptidase that removes the C-terminal tyrosine residue of alpha-tubulin, thereby regulating microtubule dynamics and function. Also able to remove the C-terminal phenylalanine residue of alpha-tubulin TUBA8. Recognizes adjacent tubulin dimers along the same protofilament. The sequence is that of Microtubule-associated tyrosine carboxypeptidase 1 from Homo sapiens (Human).